The chain runs to 592 residues: ATP-dependent RNA helicase DBP3 (592 aa).

The interval 1–146 is disordered; it reads MGKRPIEDDA…AGSYTEHTEL (146 aa). The span at 19–31 shows a compositional bias: basic residues; sequence KKSKKEKSGKSKK. The span at 73-82 shows a compositional bias: basic and acidic residues; it reads EAKEASKAGK. The segment covering 97 to 108 has biased composition (basic residues); that stretch reads AARKAARKAEKK. Over residues 116–141 the composition is skewed to polar residues; sequence TASSAPTEASSVPAQTLSSSNAGSYT. The Q motif motif lies at 179-206; the sequence is VNFKYLPVTDESQRAPFAGFTAPTPIQA. The Helicase ATP-binding domain maps to 209–382; that stretch reads WPFLLSGRDM…STFMVSPVRI (174 aa). 222–229 contacts ATP; it reads AETGSGKT. Residues 330-333 carry the DEAD box motif; that stretch reads DEAD. One can recognise a Helicase C-terminal domain in the interval 413–562; sequence RLLQLLKQYQ…EVPEELLKFG (150 aa).

The protein belongs to the DEAD box helicase family. DDX5/DBP2 subfamily.

Its subcellular location is the nucleus. The protein localises to the nucleolus. The catalysed reaction is ATP + H2O = ADP + phosphate + H(+). Functionally, ATP-dependent RNA helicase required for 60S ribosomal subunit synthesis. Involved in efficient pre-rRNA processing, predominantly at site A3, which is necessary for the normal formation of 25S and 5.8S rRNAs. The chain is ATP-dependent RNA helicase DBP3 (DBP3) from Phaeosphaeria nodorum (strain SN15 / ATCC MYA-4574 / FGSC 10173) (Glume blotch fungus).